Here is a 21-residue protein sequence, read N- to C-terminus: Cupiennin-6b (21 aa).

At S21 the chain carries Serine amide.

In terms of tissue distribution, expressed by the venom gland.

Its subcellular location is the secreted. The protein is Cupiennin-6b of Cupiennius salei (American wandering spider).